Here is a 659-residue protein sequence, read N- to C-terminus: DNA mismatch repair protein MutL (659 aa).

This sequence belongs to the DNA mismatch repair MutL/HexB family.

Its function is as follows. This protein is involved in the repair of mismatches in DNA. It is required for dam-dependent methyl-directed DNA mismatch repair. May act as a 'molecular matchmaker', a protein that promotes the formation of a stable complex between two or more DNA-binding proteins in an ATP-dependent manner without itself being part of a final effector complex. The polypeptide is DNA mismatch repair protein MutL (Ligilactobacillus salivarius (strain UCC118) (Lactobacillus salivarius)).